A 461-amino-acid polypeptide reads, in one-letter code: MAELAKSAVLVSSCTDDLLGDAKQVVVGPNQEDLHSAEAVLNRYSTVGFQASNLARAFSICEMMLTPQSPSPSLMPTEGDQASESPVMVQPTLFVGVTANLFGTGCREAIRFLCTECVPLPNGVEPATPLDDMAGISCDGTGALKPSPCDSRALIHVLVVSGGAMEHDIRRACESYKLSRDGAEEEGEQFHHPVERDRSRSKGTDCHFGNVRYNSSGVASRNLFSCVMRCLVKRLAEAQRKEKANREAAPIPEAYYDVCSWAITPSTLWYMAGLWMADIFTEALQETGEVTDEKVASEEGLKRAKSTVLYWAARNGVPIFSPSLTDGDIMEFILTAGDTGVPLLQLDLVADIHRLNRLAMRSRRTGMMILGGGVVKHHVCNANLMRNGADYAVFLNNAQEFDGSDAGARPGEAVSWGKLRLDSTAVKVYSEVTIVFPLIVVHVFVAWVRMMRSKGKENIRS.

Residues 166-167 (EH), Glu-331, His-377, 403-405 (GSD), and 412-418 (EAVSWGK) each bind spermidine. Lys-418 functions as the Nucleophile in the catalytic mechanism. The helical transmembrane segment at 428–448 (VYSEVTIVFPLIVVHVFVAWV) threads the bilayer.

This sequence belongs to the deoxyhypusine synthase family. In terms of assembly, heterotetramer formed by a homodimer of the non-catalytic regulatory subunit DHSp and a homodimer of the catalytic subunit DHSc where DHSc appears to bind spermidine and DHSp appears to bind NAD(+). It depends on NAD(+) as a cofactor.

Its subcellular location is the membrane. It carries out the reaction [eIF5A protein]-L-lysine + spermidine = [eIF5A protein]-deoxyhypusine + propane-1,3-diamine. It functions in the pathway protein modification; eIF5A hypusination. With respect to regulation, allosterically activated by DHSp. Inhibited by spermididine analog N1-guanyl-1,7-diamineoheptane (GC7). In association with the non-catalytic regulatory subunit DHSp, catalyzes the NAD-dependent oxidative cleavage of spermidine and the subsequent transfer of the butylamine moiety of spermidine to the epsilon-amino group of a specific lysine residue of the eIF5A precursor protein to form the intermediate deoxyhypusine residue. Regulates protein levels of its regulatory subunit DHSp. Required for cell growth and survival. The polypeptide is Deoxyhypusine synthase (Trypanosoma brucei brucei (strain 927/4 GUTat10.1)).